The chain runs to 308 residues: Mannan endo-1,4-beta-mannosidase (308 aa).

Catalysis depends on E125, which acts as the Proton donor. E220 (nucleophile) is an active-site residue. The tract at residues 284-308 (DGLQETSKPSTVFTDDNGGHPEPPT) is disordered. Residues 287–297 (QETSKPSTVFT) are compositionally biased toward polar residues.

This sequence belongs to the glycosyl hydrolase 5 (cellulase A) family.

The catalysed reaction is Random hydrolysis of (1-&gt;4)-beta-D-mannosidic linkages in mannans, galactomannans and glucomannans.. In terms of biological role, catalyzes the endo hydrolysis of beta-1,4-linked mannan, galactomannan and glucomannan. It is able to hydrolyze mannosidic linkages that are flanked by mannose or glucose. This is Mannan endo-1,4-beta-mannosidase from Salipaludibacillus agaradhaerens (Bacillus agaradhaerens).